The sequence spans 441 residues: Chromatin structure-remodeling complex subunit SFH1 (441 aa).

Residues 124 to 137 (DFDANDFEDDDDDD) are compositionally biased toward acidic residues. Disordered regions lie at residues 124–183 (DFDA…AAPP) and 383–407 (EMTP…KRES). Composition is skewed to basic and acidic residues over residues 138–147 (QSQRESRDGS) and 155–166 (DGTKKEEQDKFA).

The protein belongs to the SNF5 family.

It localises to the nucleus. Functionally, part of the chromatin structure-remodeling complex (RSC) which is involved in transcription regulation and nucleosome positioning. RSC is responsible for the transfer of a histone octamer from a nucleosome core particle to naked DNA. The reaction requires ATP and involves an activated RSC-nucleosome intermediate. Remodeling reaction also involves DNA translocation, DNA twist and conformational change. As a reconfigurer of centromeric and flanking nucleosomes, RSC complex is required both for proper kinetochore function in chromosome segregation and, via a PKC1-dependent signaling pathway, for organization of the cellular cytoskeleton. This subunit is essential for mitotic growth and required for cell cycle progression. The protein is Chromatin structure-remodeling complex subunit SFH1 (SFH1) of Yarrowia lipolytica (strain CLIB 122 / E 150) (Yeast).